We begin with the raw amino-acid sequence, 545 residues long: ATP synthase subunit alpha (545 aa).

173 to 180 contributes to the ATP binding site; sequence GDRKTGKT.

It belongs to the ATPase alpha/beta chains family. As to quaternary structure, F-type ATPases have 2 components, CF(1) - the catalytic core - and CF(0) - the membrane proton channel. CF(1) has five subunits: alpha(3), beta(3), gamma(1), delta(1), epsilon(1). CF(0) has three main subunits: a(1), b(2) and c(9-12). The alpha and beta chains form an alternating ring which encloses part of the gamma chain. CF(1) is attached to CF(0) by a central stalk formed by the gamma and epsilon chains, while a peripheral stalk is formed by the delta and b chains.

The protein localises to the cell membrane. It carries out the reaction ATP + H2O + 4 H(+)(in) = ADP + phosphate + 5 H(+)(out). Its function is as follows. Produces ATP from ADP in the presence of a proton gradient across the membrane. The alpha chain is a regulatory subunit. This Renibacterium salmoninarum (strain ATCC 33209 / DSM 20767 / JCM 11484 / NBRC 15589 / NCIMB 2235) protein is ATP synthase subunit alpha.